A 372-amino-acid chain; its full sequence is MAKRPEDTRVVVGMSGGVDSSVAALLLKEQGYDVIGIFMKNWDDTDENGFCTATEDYEDVIKVCNQIGIPYYAVNFEKQYWEKVFQYFLDEYKAGRTPNPDVMCNKEIKFKAFLEHALSLGADYLATGHYARVDRTDGRVKMLRGLDENKDQTYFLNQLTEEQLSKVLFPIGQLQKSRVREIAKEAGLATAAKKDSTGICFIGERNFKTFLSQYLPAQPGDMRTMEGEFKGRHDGLMYYTIGQRHGLGIGGSGEPWFVVGKDLEKNILYVDQGFDNPLLFSDKITATNVSFVHKGVFGGEEELACTAKFRYRQADHEVTVRMTGTDEAEVVFKEPVRAVTPGQAVVFYKGEECLGGGTIDDVFKDGQQLWYV.

ATP is bound by residues 13–20 (GMSGGVDS) and methionine 39. The interaction with target base in tRNA stretch occupies residues 99–101 (NPD). Cysteine 104 (nucleophile) is an active-site residue. An intrachain disulfide couples cysteine 104 to cysteine 200. An ATP-binding site is contributed by glycine 128. Residues 150-152 (KDQ) are interaction with tRNA. Cysteine 200 functions as the Cysteine persulfide intermediate in the catalytic mechanism. Residues 310–311 (RY) form an interaction with tRNA region.

The protein belongs to the MnmA/TRMU family.

Its subcellular location is the cytoplasm. The enzyme catalyses S-sulfanyl-L-cysteinyl-[protein] + uridine(34) in tRNA + AH2 + ATP = 2-thiouridine(34) in tRNA + L-cysteinyl-[protein] + A + AMP + diphosphate + H(+). In terms of biological role, catalyzes the 2-thiolation of uridine at the wobble position (U34) of tRNA, leading to the formation of s(2)U34. The chain is tRNA-specific 2-thiouridylase MnmA from Bacillus licheniformis (strain ATCC 14580 / DSM 13 / JCM 2505 / CCUG 7422 / NBRC 12200 / NCIMB 9375 / NCTC 10341 / NRRL NRS-1264 / Gibson 46).